The chain runs to 307 residues: Ornithine carbamoyltransferase (307 aa).

Carbamoyl phosphate contacts are provided by residues 56–59 (STRT), Gln-83, Arg-107, and 134–137 (HPCQ). L-ornithine-binding positions include Asn-165, Asp-223, and 227–228 (SM). Carbamoyl phosphate contacts are provided by residues 263 to 264 (CL) and Arg-291.

The protein belongs to the aspartate/ornithine carbamoyltransferase superfamily. OTCase family.

Its subcellular location is the cytoplasm. It catalyses the reaction carbamoyl phosphate + L-ornithine = L-citrulline + phosphate + H(+). Its pathway is amino-acid degradation; L-arginine degradation via ADI pathway; carbamoyl phosphate from L-arginine: step 2/2. In terms of biological role, reversibly catalyzes the transfer of the carbamoyl group from carbamoyl phosphate (CP) to the N(epsilon) atom of ornithine (ORN) to produce L-citrulline. In Cupriavidus taiwanensis (strain DSM 17343 / BCRC 17206 / CCUG 44338 / CIP 107171 / LMG 19424 / R1) (Ralstonia taiwanensis (strain LMG 19424)), this protein is Ornithine carbamoyltransferase.